The following is an 865-amino-acid chain: Alanine--tRNA ligase (865 aa).

Residues His556, His560, Cys660, and His664 each coordinate Zn(2+).

Belongs to the class-II aminoacyl-tRNA synthetase family. The cofactor is Zn(2+).

The protein resides in the cytoplasm. It carries out the reaction tRNA(Ala) + L-alanine + ATP = L-alanyl-tRNA(Ala) + AMP + diphosphate. Its function is as follows. Catalyzes the attachment of alanine to tRNA(Ala) in a two-step reaction: alanine is first activated by ATP to form Ala-AMP and then transferred to the acceptor end of tRNA(Ala). Also edits incorrectly charged Ser-tRNA(Ala) and Gly-tRNA(Ala) via its editing domain. The chain is Alanine--tRNA ligase from Vesicomyosocius okutanii subsp. Calyptogena okutanii (strain HA).